The chain runs to 107 residues: U1-lycotoxin-Ls1e (107 aa).

The signal sequence occupies residues 1–20 (MMKVLVVFALLVTLISYSSS). A propeptide spanning residues 21–41 (EGIDDLEADELLSLMANEQTR) is cleaved from the precursor. 4 disulfide bridges follow: Cys-44-Cys-59, Cys-51-Cys-68, Cys-58-Cys-86, and Cys-70-Cys-84.

The protein belongs to the neurotoxin 19 (CSTX) family. 04 (U1-Lctx) subfamily. In terms of tissue distribution, expressed by the venom gland.

It localises to the secreted. The sequence is that of U1-lycotoxin-Ls1e from Lycosa singoriensis (Wolf spider).